Here is a 389-residue protein sequence, read N- to C-terminus: Choline/ethanolaminephosphotransferase 1 (389 aa).

A helical transmembrane segment spans residues 40–60; that stretch reads VFPLWMPPNMITLMGFMFLVT. Asn-48 is a CDP-choline binding site. Asp-95 and Asp-98 together coordinate Mg(2+). Arg-103 is a binding site for CDP-choline. Position 116 (Asp-116) interacts with Mg(2+). Catalysis depends on His-117, which acts as the Proton acceptor. Residue Asp-120 coordinates Mg(2+). The next 7 membrane-spanning stretches (helical) occupy residues 141–161, 176–196, 221–241, 252–272, 280–300, 322–344, and 350–370; these read TFWF…EHYF, GLAL…EWWA, VLYM…VTNV, MVLA…VLIW, LIAT…GFLV, SLLY…GVPL, and VLLG…TSVI.

Belongs to the CDP-alcohol phosphatidyltransferase class-I family. Mg(2+) is required as a cofactor. Requires Mn(2+) as cofactor.

It localises to the membrane. The catalysed reaction is CDP-ethanolamine + a 1,2-diacyl-sn-glycerol = a 1,2-diacyl-sn-glycero-3-phosphoethanolamine + CMP + H(+). The enzyme catalyses CDP-choline + a 1,2-diacyl-sn-glycerol = a 1,2-diacyl-sn-glycero-3-phosphocholine + CMP + H(+). Its pathway is phospholipid metabolism; phosphatidylethanolamine biosynthesis; phosphatidylethanolamine from ethanolamine: step 3/3. It participates in phospholipid metabolism; phosphatidylcholine biosynthesis; phosphatidylcholine from phosphocholine: step 2/2. Catalyzes both phosphatidylcholine and phosphatidylethanolamine biosynthesis from CDP-choline and CDP-ethanolamine, respectively. Has a higher cholinephosphotransferase activity than ethanolaminephosphotransferase activity. This chain is Choline/ethanolaminephosphotransferase 1 (AAPT1), found in Arabidopsis thaliana (Mouse-ear cress).